We begin with the raw amino-acid sequence, 618 residues long: MDKNTITGLVLIGILLVGFSFLSRPSEEQIAAQKRYYDSIAVVQQQEEALRAKTEAALANEKEETAADSASLFFSATKGKEAFTTIQNNLVEITLDNKGGRVYSALLKNYMGQDKKPVVLFNGSDASMNFNFYNKKGALQTKDFYFEAVNKTDSSVTMRLAADSASYIDFIYTLKPDNYLMSFVIKATGMDGKLAASTNYVDISWSQRARQIEKGYTYENRLADLTYKYTGDDVDNLSASKDDEKSVSERLDWIAFKNQFFSSVFIAEQDFEKTTVKSKMEKQGSGYIKDYSAEMSTFFDPTGKQPTDMYFYFGPNHYKTLTALDKGREEKWELNNLVYLGWPLIRWINKWITINVFDWLSGWGLSMGIVLLLLTIMVKIVVFPATWKTYMSSAKMRVLKPKIDEINKKYPKQEDAMKKQQEVMGLYSQYGVSPMGGCLPMLLQFPILMALFMFVPSAIELRQQSFLWADDLSTYDAFITFPFHIPFLGNHLSLFCLLMTVTNILNTKYTMQQQDTGAQPQMAAMKWMMYLMPIMFLFVLNDYPSGLNYYYFISTLISVVTMIILRRTTDENKLLTELEAKKKDPKQMKKTGFAARLEAMQKQQEQLAKERANKQNKK.

Transmembrane regions (helical) follow at residues 3–23 (KNTI…SFLS), 363–383 (WGLS…IVVF), 439–459 (LPML…PSAI), 478–498 (FITF…FCLL), 520–540 (PQMA…LFVL), and 545–565 (SGLN…MIIL).

The protein belongs to the OXA1/ALB3/YidC family. Type 1 subfamily. Interacts with the Sec translocase complex via SecD. Specifically interacts with transmembrane segments of nascent integral membrane proteins during membrane integration.

Its subcellular location is the cell inner membrane. Functionally, required for the insertion and/or proper folding and/or complex formation of integral membrane proteins into the membrane. Involved in integration of membrane proteins that insert both dependently and independently of the Sec translocase complex, as well as at least some lipoproteins. Aids folding of multispanning membrane proteins. The chain is Membrane protein insertase YidC from Bacteroides fragilis (strain ATCC 25285 / DSM 2151 / CCUG 4856 / JCM 11019 / LMG 10263 / NCTC 9343 / Onslow / VPI 2553 / EN-2).